A 101-amino-acid polypeptide reads, in one-letter code: Small ribosomal subunit protein uS14 (101 aa).

Belongs to the universal ribosomal protein uS14 family. In terms of assembly, part of the 30S ribosomal subunit. Contacts proteins S3 and S10.

Functionally, binds 16S rRNA, required for the assembly of 30S particles and may also be responsible for determining the conformation of the 16S rRNA at the A site. The polypeptide is Small ribosomal subunit protein uS14 (Leptothrix cholodnii (strain ATCC 51168 / LMG 8142 / SP-6) (Leptothrix discophora (strain SP-6))).